Here is a 241-residue protein sequence, read N- to C-terminus: Carboxy-S-adenosyl-L-methionine synthase (241 aa).

S-adenosyl-L-methionine contacts are provided by residues Tyr-38, 63 to 65, 88 to 89, 116 to 117, Asn-131, and Arg-198; these read GCS, DN, and DI.

Belongs to the class I-like SAM-binding methyltransferase superfamily. Cx-SAM synthase family. As to quaternary structure, homodimer.

The enzyme catalyses prephenate + S-adenosyl-L-methionine = carboxy-S-adenosyl-L-methionine + 3-phenylpyruvate + H2O. Catalyzes the conversion of S-adenosyl-L-methionine (SAM) to carboxy-S-adenosyl-L-methionine (Cx-SAM). In Pasteurella multocida (strain Pm70), this protein is Carboxy-S-adenosyl-L-methionine synthase.